We begin with the raw amino-acid sequence, 243 residues long: Exosome complex component Rrp41 (243 aa).

It belongs to the RNase PH family. Rrp41 subfamily. In terms of assembly, component of the archaeal exosome complex. Forms a hexameric ring-like arrangement composed of 3 Rrp41-Rrp42 heterodimers. The hexameric ring associates with a trimer of Rrp4 and/or Csl4 subunits.

The protein localises to the cytoplasm. Functionally, catalytic component of the exosome, which is a complex involved in RNA degradation. Has 3'-&gt;5' exoribonuclease activity. Can also synthesize heteromeric RNA-tails. The chain is Exosome complex component Rrp41 from Cenarchaeum symbiosum (strain A).